The sequence spans 210 residues: Large ribosomal subunit protein uL4 (210 aa).

A compositionally biased stretch (polar residues) spans 44 to 54 (QRQGTASTLTR). The tract at residues 44–96 (QRQGTASTLTRSEVRGGGRKPYKQKGTGRARQGSIRTPLRPGGGVIFGPKPRS) is disordered. Residues 60-71 (GGRKPYKQKGTG) are compositionally biased toward basic residues.

The protein belongs to the universal ribosomal protein uL4 family. In terms of assembly, part of the 50S ribosomal subunit.

In terms of biological role, one of the primary rRNA binding proteins, this protein initially binds near the 5'-end of the 23S rRNA. It is important during the early stages of 50S assembly. It makes multiple contacts with different domains of the 23S rRNA in the assembled 50S subunit and ribosome. Functionally, forms part of the polypeptide exit tunnel. The protein is Large ribosomal subunit protein uL4 of Prochlorococcus marinus (strain MIT 9515).